The primary structure comprises 78 residues: Ferritin light chain (78 aa).

Residues Glu-1 to Ser-59 enclose the Ferritin-like diiron domain.

Belongs to the ferritin family. As to quaternary structure, oligomer of 24 subunits. There are two types of subunits: L (light) chain and H (heavy) chain. The major chain can be light or heavy, depending on the species and tissue type. The functional molecule forms a roughly spherical shell with a diameter of 12 nm and contains a central cavity into which the insoluble mineral iron core is deposited. Interacts with NCOA4.

The protein localises to the cytoplasmic vesicle. Its subcellular location is the autophagosome. It localises to the cytoplasm. It is found in the autolysosome. Its function is as follows. Stores iron in a soluble, non-toxic, readily available form. Important for iron homeostasis. Iron is taken up in the ferrous form and deposited as ferric hydroxides after oxidation. Also plays a role in delivery of iron to cells. Mediates iron uptake in capsule cells of the developing kidney. Delivery to lysosomes by the cargo receptor NCOA4 for autophagic degradation and release or iron. This Sus scrofa (Pig) protein is Ferritin light chain (FTL).